Here is a 490-residue protein sequence, read N- to C-terminus: Bifunctional IPC transferase and DIPP synthase (490 aa).

The interval 72–290 is mobA-like NTP transferase; the sequence is LMKAVILAAG…RANRALVSAA (219 aa). Residues 78 to 80, K91, D144, and E180 each bind CTP; that span reads LAA. Position 180 (E180) interacts with Mg(2+). The interval 291-490 is CDP-alcohol phosphatidyltransferases; it reads VKGSGDGFIS…VTLLAVLVSK (200 aa). The next 4 membrane-spanning stretches (helical) occupy residues 329–349, 389–409, 447–467, and 468–488; these read FLVGAFSALASFFSIPLAGLL, FLAIIALLYPKTATVAMFAIF, IFLIMIFCLLSAISLQWIFWM, and FLFVAAISLTRVVVTLLAVLV.

This sequence in the N-terminal section; belongs to the MobA family. In the C-terminal section; belongs to the CDP-alcohol phosphatidyltransferase class-I family. Forms a mixture of monomers and dimers in solution, with prevalence of the monomeric form. Mg(2+) is required as a cofactor.

It localises to the membrane. The enzyme catalyses 1D-myo-inositol 3-phosphate + CTP + H(+) = CDP-1L-myo-inositol + diphosphate. It catalyses the reaction CDP-1L-myo-inositol + 1D-myo-inositol 3-phosphate = bis(1L-myo-inositol) 3,1'-phosphate 1-phosphate + CMP + H(+). Functionally, involved in biosynthesis of di-myo-inositol phosphate (DIP), a widespread organic solute in microorganisms adapted to hot environments. Catalyzes the condensation of CTP and L-myo-inositol-1-phosphate into CDP-L-myo-inositol, as well as the biosynthesis of di-myo-inositol-1,3'-phosphate-1'-phosphate (DIPP) from CDP-L-myo-inositol and L-myo-inositol-1-phosphate. The cytidylyltransferase is absolutely specific for CTP and L-myo-inositol-1-P. The DIPP synthase uses only L-myoinositol-1-phosphate as an alcohol acceptor, but CDP-glycerol, as well as CDP-L-myo-inositol and CDP-D-myoinositol, are recognized as alcohol donors. In Archaeoglobus fulgidus (strain ATCC 49558 / DSM 4304 / JCM 9628 / NBRC 100126 / VC-16), this protein is Bifunctional IPC transferase and DIPP synthase.